Reading from the N-terminus, the 438-residue chain is UDP-N-acetylglucosamine 1-carboxyvinyltransferase 1 (438 aa).

22–23 (KN) lines the phosphoenolpyruvate pocket. Position 95 (R95) interacts with UDP-N-acetyl-alpha-D-glucosamine. Catalysis depends on C119, which acts as the Proton donor. At C119 the chain carries 2-(S-cysteinyl)pyruvic acid O-phosphothioketal. Residues 124–128 (RPIDL), D307, and V329 each bind UDP-N-acetyl-alpha-D-glucosamine.

It belongs to the EPSP synthase family. MurA subfamily.

It is found in the cytoplasm. The enzyme catalyses phosphoenolpyruvate + UDP-N-acetyl-alpha-D-glucosamine = UDP-N-acetyl-3-O-(1-carboxyvinyl)-alpha-D-glucosamine + phosphate. The protein operates within cell wall biogenesis; peptidoglycan biosynthesis. Its function is as follows. Cell wall formation. Adds enolpyruvyl to UDP-N-acetylglucosamine. This chain is UDP-N-acetylglucosamine 1-carboxyvinyltransferase 1, found in Lactiplantibacillus plantarum (strain ATCC BAA-793 / NCIMB 8826 / WCFS1) (Lactobacillus plantarum).